We begin with the raw amino-acid sequence, 155 residues long: Ribosome maturation factor RimP (155 aa).

It belongs to the RimP family.

Its subcellular location is the cytoplasm. Its function is as follows. Required for maturation of 30S ribosomal subunits. This Agathobacter rectalis (strain ATCC 33656 / DSM 3377 / JCM 17463 / KCTC 5835 / VPI 0990) (Eubacterium rectale) protein is Ribosome maturation factor RimP.